The following is an 821-amino-acid chain: G-type lectin S-receptor-like serine/threonine-protein kinase SD2-5 (821 aa).

A signal peptide spans 1-21; it reads MRGVFIVIVTCLVFLPDPLRA. Residues 22-429 lie on the Extracellular side of the membrane; that stretch reads GVASIGSITP…NGEDDGKHFP (408 aa). Residues 33-148 form the Bulb-type lectin domain; sequence FGGSQMNYIN…DGTSIWESFD (116 aa). N-linked (GlcNAc...) asparagine glycans are attached at residues N51, N121, N174, and N248. Residues 280-314 enclose the EGF-like; atypical domain; sequence PSDLCGTPEPCGPYYVCSGSKVCGCVSGLSRARSD. Cystine bridges form between C284–C296 and C290–C302. Residues 323-411 enclose the PAN domain; it reads CKKTKDNATL…SGFVSYIKIA (89 aa). N329, N370, and N380 each carry an N-linked (GlcNAc...) asparagine glycan. Intrachain disulfides connect C363/C385 and C367/C373. Residues 430–450 traverse the membrane as a helical segment; the sequence is YVVIIVVVTVFIIAVLIFVAF. The Cytoplasmic portion of the chain corresponds to 451-821; it reads RIHKRKKMIL…LSAVRLSGPR (371 aa). Positions 493 to 768 constitute a Protein kinase domain; the sequence is NNFSVKLGQG…KVVQMLEGVF (276 aa). Residues 499-507 and K521 contribute to the ATP site; that span reads LGQGGFGSV. The tract at residues 581–599 is caM-binding; that stretch reads KDGDVLLDWDTRFNIALGT. Residue D618 is the Proton acceptor of the active site. Phosphoserine is present on S635. T652 carries the phosphothreonine modification.

The protein belongs to the protein kinase superfamily. Ser/Thr protein kinase family. Interacts with PUB9, PUB13, PUB14 and PUB29.

It localises to the membrane. It carries out the reaction L-seryl-[protein] + ATP = O-phospho-L-seryl-[protein] + ADP + H(+). It catalyses the reaction L-threonyl-[protein] + ATP = O-phospho-L-threonyl-[protein] + ADP + H(+). The chain is G-type lectin S-receptor-like serine/threonine-protein kinase SD2-5 (SD25) from Arabidopsis thaliana (Mouse-ear cress).